Here is a 245-residue protein sequence, read N- to C-terminus: Proteolipid protein DM alpha (245 aa).

The next 4 helical transmembrane spans lie at 19–35, 71–87, 117–133, and 204–220; these read LIAT…FCGC, IIYG…VLLL, FIFL…GVFA, and LFIA…IALL.

Belongs to the myelin proteolipid protein family. As to expression, highly expressed in white matter in myelinating shark brain.

It localises to the membrane. The protein is Proteolipid protein DM alpha of Squalus acanthias (Spiny dogfish).